Consider the following 443-residue polypeptide: Gasdermin-A2 (443 aa).

The tract at residues 1–249 is triggers pyroptosis; that stretch reads MSMFEDVTRA…QGSTVQMISG (249 aa). 9 to 13 lines the a cardiolipin pocket; it reads RALAR. A run of 4 beta stranded transmembrane segments spans residues 78–95, 99–120, 164–179, and 183–197; these read NFSFKNMLDVRVEGDVEV, MKVKGTVGLSQSSTLEVQMLSV, VTLKRASNAISKFSLN, and LGLQGSVNHKEAVTI. Positions 249-312 form a coiled coil; the sequence is GEMHEDFKTL…GALDKGHEVT (64 aa).

This sequence belongs to the gasdermin family. In terms of assembly, homooligomer; homooligomeric ring-shaped pore complex containing 18-36 subunits when inserted in the membrane. Post-translationally, cleavage relieves autoinhibition by releasing the N-terminal moiety (Gasdermin-A2, N-terminal) that initiates pyroptosis. In contrast to Gsdma, not cleaved by bacterial effector protein SpeB. In terms of processing, palmitoylated. Expressed in the gastrointestinal tract, specifically from the middle to the upper region of the gastric mucosa in the glandular stomach.

It localises to the cytoplasm. The protein resides in the perinuclear region. It is found in the cytosol. Its subcellular location is the cell membrane. The full-length protein before cleavage is inactive: intramolecular interactions between N- and C-terminal domains mediate autoinhibition in the absence of activation signal. The intrinsic pyroptosis-inducing activity is carried by the released N-terminal moiety (Gasdermin-A2, N-terminal). In terms of biological role, this form constitutes the precursor of the pore-forming protein and acts as a sensor of infection: upon bacterial infection, specifically cleaved by some bacterial effector protein, releasing the N-terminal moiety (Gasdermin-A2, N-terminal) that binds to membranes and forms pores, triggering pyroptosis. Pore-forming protein that causes membrane permeabilization and pyroptosis. Released upon cleavage of Gasdermin-A2, and binds to membrane inner leaflet lipids. Homooligomerizes within the membrane and forms pores of 10-15 nanometers (nm) of inner diameter, triggering pyroptosis. Binds to membrane inner leaflet lipids, such as phosphatidylinositol (4,5)-bisphosphate. The protein is Gasdermin-A2 of Mus musculus (Mouse).